Here is a 466-residue protein sequence, read N- to C-terminus: 3-isopropylmalate dehydratase large subunit (466 aa).

C347, C407, and C410 together coordinate [4Fe-4S] cluster.

It belongs to the aconitase/IPM isomerase family. LeuC type 1 subfamily. Heterodimer of LeuC and LeuD. The cofactor is [4Fe-4S] cluster.

It catalyses the reaction (2R,3S)-3-isopropylmalate = (2S)-2-isopropylmalate. Its pathway is amino-acid biosynthesis; L-leucine biosynthesis; L-leucine from 3-methyl-2-oxobutanoate: step 2/4. Functionally, catalyzes the isomerization between 2-isopropylmalate and 3-isopropylmalate, via the formation of 2-isopropylmaleate. The polypeptide is 3-isopropylmalate dehydratase large subunit (Shigella sonnei (strain Ss046)).